Consider the following 149-residue polypeptide: MSQTHRILLLNGPNLNMLGAREPKHYGSISLTSIEEKIQTLATQHNVKVECFQANSEEKLINKIHESFQQVDFILINPAAYTHTSVALRDALLAVSIPFVEIHLSNVHKREPFRHHSYFSDVAEGVICGLGAKGYEFAFLFAMDYLAKK.

Catalysis depends on tyrosine 26, which acts as the Proton acceptor. Residues asparagine 77, histidine 83, and aspartate 90 each coordinate substrate. The active-site Proton donor is the histidine 103. Substrate is bound by residues 104–105 (LS) and arginine 114.

This sequence belongs to the type-II 3-dehydroquinase family. In terms of assembly, homododecamer.

The catalysed reaction is 3-dehydroquinate = 3-dehydroshikimate + H2O. It participates in metabolic intermediate biosynthesis; chorismate biosynthesis; chorismate from D-erythrose 4-phosphate and phosphoenolpyruvate: step 3/7. In terms of biological role, catalyzes a trans-dehydration via an enolate intermediate. This chain is 3-dehydroquinate dehydratase, found in Haemophilus influenzae (strain PittEE).